The chain runs to 110 residues: Cyclin-dependent protein kinase inhibitor SMR8 (110 aa).

Interacts with CDKA-1 and D-type cyclins. In terms of tissue distribution, expressed in the root vascular tissue.

Functionally, probable cyclin-dependent protein kinase (CDK) inhibitor that functions as a repressor of mitosis in the endoreduplication cell cycle. The polypeptide is Cyclin-dependent protein kinase inhibitor SMR8 (Arabidopsis thaliana (Mouse-ear cress)).